A 640-amino-acid chain; its full sequence is Arogenate dehydrogenase 1, chloroplastic (640 aa).

The N-terminal 18 residues, 1–18 (MAETLITKPPLSLSFTSL), are a transit peptide targeting the chloroplast. 2 consecutive Prephenate/arogenate dehydrogenase domains span residues 53 to 334 (LRIA…GEND) and 365 to 640 (LKIG…LLTS).

It belongs to the prephenate/arogenate dehydrogenase family. As to expression, expressed in roots, stems, leaves, flowers, siliques and seeds. More abundant in seeds.

It localises to the plastid. The protein resides in the chloroplast. It catalyses the reaction L-arogenate + NADP(+) = L-tyrosine + CO2 + NADPH. The protein operates within amino-acid biosynthesis; L-tyrosine biosynthesis; L-tyrosine from L-arogenate (NADP(+) route): step 1/1. Functionally, involved in the biosynthesis of tyrosine. Has no prephenate dehydrogenase activity. This Arabidopsis thaliana (Mouse-ear cress) protein is Arogenate dehydrogenase 1, chloroplastic (TYRAAT1).